We begin with the raw amino-acid sequence, 597 residues long: mRNA-capping enzyme (597 aa).

The TPase stretch occupies residues 1–212 (MAYNKIPPRW…DEDGKKDSEP (212 aa)). In terms of domain architecture, Tyrosine-protein phosphatase spans 25–183 (LPLKTMLGPR…FRRYGDIEEA (159 aa)). C126 (phosphocysteine intermediate) is an active-site residue. A disordered region spans residues 181-221 (EEAPPPPVLPDWCFEDEDEEDEDEDGKKDSEPGSSASFSKR). Positions 193–204 (CFEDEDEEDEDE) are enriched in acidic residues. Residues 229-597 (GAIFLEGITV…PPPKRLHRPT (369 aa)) form a GTase region. K294 serves as the catalytic N6-GMP-lysine intermediate. GTP is bound by residues R299, R315, 343–345 (DGE), 458–460 (KWK), and 528–533 (RQRIDK). Residues 330–386 (RKDLRMHLSNTLLDGEMIIDKVNGQAVPRYLIYDIIKFNAQPVGDCDFNIRLQCIER) are interaction with POLR2A. Positions 573–597 (KRKYPLDPDTELMPPPPPKRLHRPT) are disordered.

The protein in the N-terminal section; belongs to the non-receptor class of the protein-tyrosine phosphatase family. It in the C-terminal section; belongs to the eukaryotic GTase family. As to quaternary structure, interacts with SUPT5H and RNMT. Interacts with POLR2A (via C-terminus); this enhances guanylyltransferase activity. Binds (via GTase domain) to the elongating phosphorylated form of RNA polymerase II; can form direct interactions with the phosphorylated POLR2A C-terminal domain and indirect interactions via bound RNA.

Its subcellular location is the nucleus. It catalyses the reaction a 5'-end triphospho-ribonucleoside in mRNA + H2O = a 5'-end diphospho-ribonucleoside in mRNA + phosphate + H(+). The catalysed reaction is a 5'-end diphospho-ribonucleoside in mRNA + GTP + H(+) = a 5'-end (5'-triphosphoguanosine)-ribonucleoside in mRNA + diphosphate. RNA triphosphatase activity is inhibited by vanadate, iodoacetate and magnesium. Bifunctional mRNA-capping enzyme exhibiting RNA 5'-triphosphate monophosphatase activity in the N-terminal part and mRNA guanylyltransferase activity in the C-terminal part. Catalyzes the first two steps of cap formation: by removing the gamma-phosphate from the 5'-triphosphate end of nascent mRNA to yield a diphosphate end, and by transferring the GMP moiety of GTP to the 5'-diphosphate terminus of RNA via a covalent enzyme-GMP reaction intermediate. The polypeptide is mRNA-capping enzyme (Rngtt) (Mus musculus (Mouse)).